Here is a 521-residue protein sequence, read N- to C-terminus: MAKITRALISVSDKTGIVEFSRELAGYGVEILSTGGTAKLLREAGLKVKDVSEFTGFPEMLDGRVKTLHPKVHGGLLGMRGNPEHVATMKAHGIEPIDMVVVNLYPFEATVAKPDCTLEDAIENIDIGGPTMLRSAAKNNADVTVVVDHNDYRLVLDEMKAAGGGVSKETNFRLAVKVYQHTAAYDGAISNWLGARTGEGVAAYPDTLTLQFKKAQGMRYGENPHQSAAFYVERDVKEASVATARQLQGKELSYNNIGDTDAALECVKQFAEGPGCVIVKHANPCGVAIGDTLLDAYDRAYKTDPESAFGGIIAFNGELDEATAKAIVERQFVEVIIAPKVSAKASEVVAAKKNVRLLECGTWQKEPMPRLDFKRVNGGLLVQYTDLALHGELKVVTKRAPTEKEMIDLLFTWRVAKFVKSNAIVYGKDGMTIGVGAGQMSRVNSARIAAIKAEHAGLPVAGSVMASDAFFPFRDGLDNAAAVGITAVIQPGGSMRDEEVIAAADEHGMAMVFTSMRHFRH.

In terms of domain architecture, MGS-like spans 1 to 147; that stretch reads MAKITRALIS…KNNADVTVVV (147 aa).

Belongs to the PurH family.

The enzyme catalyses (6R)-10-formyltetrahydrofolate + 5-amino-1-(5-phospho-beta-D-ribosyl)imidazole-4-carboxamide = 5-formamido-1-(5-phospho-D-ribosyl)imidazole-4-carboxamide + (6S)-5,6,7,8-tetrahydrofolate. It catalyses the reaction IMP + H2O = 5-formamido-1-(5-phospho-D-ribosyl)imidazole-4-carboxamide. Its pathway is purine metabolism; IMP biosynthesis via de novo pathway; 5-formamido-1-(5-phospho-D-ribosyl)imidazole-4-carboxamide from 5-amino-1-(5-phospho-D-ribosyl)imidazole-4-carboxamide (10-formyl THF route): step 1/1. It functions in the pathway purine metabolism; IMP biosynthesis via de novo pathway; IMP from 5-formamido-1-(5-phospho-D-ribosyl)imidazole-4-carboxamide: step 1/1. The sequence is that of Bifunctional purine biosynthesis protein PurH from Geotalea uraniireducens (strain Rf4) (Geobacter uraniireducens).